The sequence spans 433 residues: Chaperone SurA (433 aa).

The first 20 residues, 1–20 (MKNWRTLIFGLMFSVSTAFA), serve as a signal peptide directing secretion. PpiC domains are found at residues 171 to 272 (DTEL…KVND) and 282 to 382 (VTEV…QLLD).

The protein resides in the periplasm. It carries out the reaction [protein]-peptidylproline (omega=180) = [protein]-peptidylproline (omega=0). Its function is as follows. Chaperone involved in the correct folding and assembly of outer membrane proteins. Recognizes specific patterns of aromatic residues and the orientation of their side chains, which are found more frequently in integral outer membrane proteins. May act in both early periplasmic and late outer membrane-associated steps of protein maturation. This Photorhabdus laumondii subsp. laumondii (strain DSM 15139 / CIP 105565 / TT01) (Photorhabdus luminescens subsp. laumondii) protein is Chaperone SurA.